Here is a 454-residue protein sequence, read N- to C-terminus: Replicative DNA helicase DnaB (454 aa).

An N-terminal domain (NTD) region spans residues 1-149; the sequence is MSELFSERIP…LDEADRKIME (149 aa). A linker helix region spans residues 163–176; it reads KDILVQTYDNIEML. The SF4 helicase domain maps to 179–445; it reads RDGEITGIPT…NKFVNLERRF (267 aa). Residues 183 to 454 form a C-terminal domain (CTD) region; the sequence is ITGIPTGFTE…FDEAQIPPGA (272 aa). Ser-213, Gly-215, Lys-216, Thr-217, and Ala-218 together coordinate ATP. The Nucleophile role is filled by Glu-241. Positions 250 and 362 each coordinate ATP. The ssDNA site is built by Arg-381, Glu-382, and Gly-384. Residues Lys-418, Gln-419, and Arg-420 each contribute to the ATP site.

Belongs to the helicase family. DnaB subfamily. As to quaternary structure, homohexamer. Interacts with DnaG primase, as DnaB(6):DnaG(3). Interacts with the N-terminus of DnaI (shown with DnaI of B.subtilis), forms a helicase DnaB(6):DnaI(6) complex. The DnaB-DnaI complex is disrupted by DnaD (DnaD and DnaI from B.subtilis). A stable complex DnaI(6):DnaB(6):DnaG(3) fragment can be isolated; DnaI and DnaG do not contact each other (DnaI in this complex is derived from B.subtilis). Forms a complex with DNA clamp loader protein tau (shown with B.subtilis HolA) tau(3):DnaB(6); a single ATP hydrolysis even is sufficient for complex formation.

It catalyses the reaction Couples ATP hydrolysis with the unwinding of duplex DNA at the replication fork by translocating in the 5'-3' direction. This creates two antiparallel DNA single strands (ssDNA). The leading ssDNA polymer is the template for DNA polymerase III holoenzyme which synthesizes a continuous strand.. The enzyme catalyses ATP + H2O = ADP + phosphate + H(+). Its function is as follows. The main replicative DNA helicase, it participates in initiation and elongation during chromosome replication. Travels ahead of the DNA replisome, separating double-stranded (ds)DNA into templates for DNA synthesis. Binding of single-stranded (ss)DNA to the hexamer suggests a 2-nucleotide step size for the helicase and a hand-over-hand mechanism of DNA unwinding. Has ssDNA-stimulated ATPase activity. DnaG primase stimulates the helicase activity (the helicase direction was not determine but is probably 5'-3'). Loaded onto DNA by helicase loader DnaI (shown with DnaI of B.subtilis); ATP-binding enhances loading and subsequent ATP hydrolysis dissociates the complex, leaving helicase on the DNA. Binds ssDNA and less well dsDNA, in the presence of ADPNP (probably 5'-adenylyl beta, gamma-imidodiphosphate, but not ATP) binding to both DNAs is improved. In Geobacillus stearothermophilus (Bacillus stearothermophilus), this protein is Replicative DNA helicase DnaB.